A 730-amino-acid polypeptide reads, in one-letter code: Elongation factor 2 (730 aa).

Residues 19 to 260 (DRIRNIGIVA…MVVKHLPNPL (242 aa)) form the tr-type G domain. GTP contacts are provided by residues 28 to 35 (AHIDHGKT), 94 to 98 (DTPGH), and 148 to 151 (NKVD). H597 is subject to Diphthamide.

It belongs to the TRAFAC class translation factor GTPase superfamily. Classic translation factor GTPase family. EF-G/EF-2 subfamily.

It localises to the cytoplasm. In terms of biological role, catalyzes the GTP-dependent ribosomal translocation step during translation elongation. During this step, the ribosome changes from the pre-translocational (PRE) to the post-translocational (POST) state as the newly formed A-site-bound peptidyl-tRNA and P-site-bound deacylated tRNA move to the P and E sites, respectively. Catalyzes the coordinated movement of the two tRNA molecules, the mRNA and conformational changes in the ribosome. The sequence is that of Elongation factor 2 from Methanoculleus marisnigri (strain ATCC 35101 / DSM 1498 / JR1).